The primary structure comprises 381 residues: uncharacterized protein (381 aa).

Residues 331-340 show a composition bias toward polar residues; that stretch reads MQNGYANNGR. The tract at residues 331 to 381 is disordered; that stretch reads MQNGYANNGRNHQRERFERPEKNSKKNKFLPFNGSNKEKKRDKLKKNCVIM. The span at 342–354 shows a compositional bias: basic and acidic residues; sequence HQRERFERPEKNS. Over residues 372-381 the composition is skewed to basic residues; sequence DKLKKNCVIM.

The protein resides in the cytoplasm. It is found in the nucleus. This is an uncharacterized protein from Saccharomyces cerevisiae (strain ATCC 204508 / S288c) (Baker's yeast).